The primary structure comprises 397 residues: MNCEREQLRGNQEAAAAPDTMAQPYASAQFAPPQNGIPAEYTAPHPHPAPEYTGQTTVPEHTLNLYPPAQTHSEQSPADTSAQTVSGTATQTDDAAPTDGQPQTQPSENTENKSQPKRLHVSNIPFRFRDPDLRQMFGQFGKILDVEIIFNERGSKGFGFVTFENSADADRAREKLHGTVVEGRKIEVNNATARVMTNKKTVNPYTNGWKLNPVVGAVYSPEFYAGTVLLCQANQEGSSMYSAPSSLVYTSAMPGFPYPAATAAAAYRGAHLRGRGRTVYNTFRAAAPPPPIPAYGGVVYQDGFYGADIYGGYAAYRYAQPTPATAAAYSDSYGRVYAADPYHHALAPAPTYGVGAMNAFAPLTDAKTRSHADDVGLVLSSLQASIYRGGYNRFAPY.

Residues 1 to 121 (MNCEREQLRG…NKSQPKRLHV (121 aa)) are disordered. A compositionally biased stretch (polar residues) spans 70 to 87 (QTHSEQSPADTSAQTVSG). A compositionally biased stretch (low complexity) spans 88–99 (TATQTDDAAPTD). Residues 100 to 113 (GQPQTQPSENTENK) are compositionally biased toward polar residues. Residues 117-193 (KRLHVSNIPF…RKIEVNNATA (77 aa)) form the RRM domain. At Arg317 the chain carries Asymmetric dimethylarginine. Arg388 is subject to Omega-N-methylarginine.

Binds to the C-terminus of ATXN2. In terms of tissue distribution, predominantly expressed in muscle and brain.

It localises to the nucleus. It is found in the cytoplasm. Functionally, RNA-binding protein that regulates alternative splicing events by binding to 5'-UGCAUGU-3' elements. Regulates alternative splicing of tissue-specific exons and of differentially spliced exons during erythropoiesis. The chain is RNA binding protein fox-1 homolog 1 (RBFOX1) from Homo sapiens (Human).